A 326-amino-acid polypeptide reads, in one-letter code: Interleukin-1-binding protein (326 aa).

Positions 1–18 are cleaved as a signal peptide; sequence MSIPPVIFLPIFFYSSFV. Ig-like C2-type domains are found at residues 24–115, 122–208, and 221–322; these read PECI…LNLT, SNID…YDVT, and PPTM…KTVT. The cysteines at positions 48 and 99 are disulfide-linked. N-linked (GlcNAc...) asparagine; by host glycosylation is found at Asn-80, Asn-103, and Asn-113. A disulfide bridge connects residues Cys-143 and Cys-194. Asn-237 is a glycosylation site (N-linked (GlcNAc...) asparagine; by host). Cys-242 and Cys-309 are oxidised to a cystine.

It belongs to the interleukin-1 receptor family. Interacts with mouse Il1b.

It is found in the secreted. Functionally, may reduce the host inflammatory response by interacting with inteleukin-1 beta (Il1b) and thus decreasing the association between IL1B and its cellular receptor. In Bos taurus (Bovine), this protein is Interleukin-1-binding protein (OPG201).